Here is a 276-residue protein sequence, read N- to C-terminus: MGIKKYNPTTNGRRNMTTNDFAEITTDRPEKSLLAPLSKKAGRNNQGKITVRHQGGGHKRQYRIIDFKRNKDGIPGRVATIEYDPNRSANIALINYVDGEKRYILAPKSLEVGMEVMSGPEADIKIGNALPLINIPVGTVVHNIELKPGRGGQLVRSAGTSAQVLGKEGKYVLVRLTSGEVRLVLSACRASIGQVGNEQHELIKIGKAGRSRWLGKRPTVRGSVMNPVDHPHGGGEGRSPIGRKSPMSPWGKPTLGFKTRKKNKASDKFIVRRRKK.

Disordered regions lie at residues 1 to 20 (MGIK…TTND) and 219 to 276 (TVRG…RRKK). Residues 7–20 (NPTTNGRRNMTTND) show a composition bias toward polar residues.

Belongs to the universal ribosomal protein uL2 family. In terms of assembly, part of the 50S ribosomal subunit. Forms a bridge to the 30S subunit in the 70S ribosome.

In terms of biological role, one of the primary rRNA binding proteins. Required for association of the 30S and 50S subunits to form the 70S ribosome, for tRNA binding and peptide bond formation. It has been suggested to have peptidyltransferase activity; this is somewhat controversial. Makes several contacts with the 16S rRNA in the 70S ribosome. This chain is Large ribosomal subunit protein uL2, found in Bacillus cereus (strain G9842).